The chain runs to 220 residues: Probable septum site-determining protein MinC (220 aa).

This sequence belongs to the MinC family. In terms of assembly, interacts with MinD and FtsZ.

Cell division inhibitor that blocks the formation of polar Z ring septums. Rapidly oscillates between the poles of the cell to destabilize FtsZ filaments that have formed before they mature into polar Z rings. Prevents FtsZ polymerization. The chain is Probable septum site-determining protein MinC from Vibrio atlanticus (strain LGP32) (Vibrio splendidus (strain Mel32)).